The primary structure comprises 400 residues: Renin (400 aa).

The N-terminal stretch at 1 to 17 (MPLWGLLLALWGCSTFS) is a signal peptide. A propeptide spans 18-59 (LPADTAAFRRIFLKKMPSVRESLKERGVDMAQLGAEWSQLTK) (activation peptide). Asn-65 is a glycosylation site (N-linked (GlcNAc...) asparagine). The Peptidase A1 domain maps to 80–397 (YYGEIGIGTP…DRRNNRIGFA (318 aa)). Residue Asp-98 is part of the active site. A disulfide bridge connects residues Cys-111 and Cys-118. Asn-135 is a glycosylation site (N-linked (GlcNAc...) asparagine). The cysteines at positions 277 and 281 are disulfide-linked. Residue Asp-286 is part of the active site. Residues Cys-320 and Cys-356 are joined by a disulfide bond. Asn-353 is a glycosylation site (N-linked (GlcNAc...) asparagine).

The protein belongs to the peptidase A1 family. In terms of assembly, interacts with ATP6AP2. As to expression, kidney.

It localises to the secreted. It is found in the membrane. It catalyses the reaction Cleavage of Leu-|-Xaa bond in angiotensinogen to generate angiotensin I.. Interaction with ATP6AP2 results in a 5-fold increased efficiency in angiotensinogen processing. Functionally, renin is a highly specific endopeptidase, whose only known function is to generate angiotensin I from angiotensinogen in the plasma, initiating a cascade of reactions that produce an elevation of blood pressure and increased sodium retention by the kidney. In Ovis aries (Sheep), this protein is Renin (REN).